Reading from the N-terminus, the 426-residue chain is 3-phosphoshikimate 1-carboxyvinyltransferase (426 aa).

K22, S23, and R27 together coordinate 3-phosphoshikimate. K22 serves as a coordination point for phosphoenolpyruvate. Positions 96 and 124 each coordinate phosphoenolpyruvate. 3-phosphoshikimate-binding residues include S170, S171, Q172, S198, D314, N337, and K341. Q172 serves as a coordination point for phosphoenolpyruvate. D314 acts as the Proton acceptor in catalysis. R345, R387, and K412 together coordinate phosphoenolpyruvate.

It belongs to the EPSP synthase family. In terms of assembly, monomer.

Its subcellular location is the cytoplasm. It catalyses the reaction 3-phosphoshikimate + phosphoenolpyruvate = 5-O-(1-carboxyvinyl)-3-phosphoshikimate + phosphate. The protein operates within metabolic intermediate biosynthesis; chorismate biosynthesis; chorismate from D-erythrose 4-phosphate and phosphoenolpyruvate: step 6/7. Functionally, catalyzes the transfer of the enolpyruvyl moiety of phosphoenolpyruvate (PEP) to the 5-hydroxyl of shikimate-3-phosphate (S3P) to produce enolpyruvyl shikimate-3-phosphate and inorganic phosphate. This Shewanella pealeana (strain ATCC 700345 / ANG-SQ1) protein is 3-phosphoshikimate 1-carboxyvinyltransferase.